A 734-amino-acid polypeptide reads, in one-letter code: Cullin-4 (734 aa).

The 63-residue stretch at 666–728 (DRQFELQASI…KEYLEREDND (63 aa)) folds into the Cullin neddylation domain. Lys680 is covalently cross-linked (Glycyl lysine isopeptide (Lys-Gly) (interchain with G-Cter in NEDD8)).

The protein belongs to the cullin family. As to quaternary structure, component of the Clr4 methyltransferase complex (ClrC) composed of at least clr4, rik1, pcu4, rbx1, raf1 and raf2. The cullin pcu4, rik1, raf1, raf2 and the ring-box protein rbx1 are components of an E3 ubiquitin ligase, whose activity is essential for heterochromatin assembly. Post-translationally, neddylated; enhancing the ubiquitin-ligase activity.

The protein localises to the cytoplasm. Its subcellular location is the nucleus. It is found in the chromosome. It functions in the pathway protein modification; protein ubiquitination. Its function is as follows. Required, indirectly, for activation of ribonucleotide reductase through the degradation of the protein spd1, thereby supplying deoxyribonucleotides for DNA replication and repair. Also has a role as a scaffold for assembling ubiquitin ligases. Component of the Clr4 methyltransferase complex (ClrC) which contributes to the establishment of heterochromatin by specifically methylating histone H3 to form H3K9me. ClrC preferentially ubiquitylates H3K14 and ClrC-mediated H3 ubiquitination promotes clr4 methyltransferase activity for the methylation of H3K9. H3K9me represents a specific tag for epigenetic transcriptional repression by recruiting swi6/HP1 to methylated histones which leads to transcriptional silencing within centromeric heterochromatin, telomeric regions and at the silent mating-type loci. The sequence is that of Cullin-4 (pcu4) from Schizosaccharomyces pombe (strain 972 / ATCC 24843) (Fission yeast).